A 573-amino-acid chain; its full sequence is Urease subunit alpha 2 (573 aa).

Residues 136–573 (GAIDAHVHLI…LPMAQRYFLF (438 aa)) form the Urease domain. Ni(2+) is bound by residues H141, H143, and K224. K224 carries the N6-carboxylysine modification. H226 is a binding site for substrate. The Ni(2+) site is built by H253 and H279. H327 functions as the Proton donor in the catalytic mechanism. Residue D367 coordinates Ni(2+).

This sequence belongs to the metallo-dependent hydrolases superfamily. Urease alpha subunit family. In terms of assembly, may form a heterohexamer of 3 UreC (alpha) and 3 UreAB (gamma/beta) subunits. May also form a heterotrimer of UreA (gamma), UreB (beta) and UreC (alpha) subunits. Three heterotrimers associate to form the active enzyme. Requires Ni cation as cofactor. Carboxylation allows a single lysine to coordinate two nickel ions.

The protein localises to the cytoplasm. The enzyme catalyses urea + 2 H2O + H(+) = hydrogencarbonate + 2 NH4(+). Its pathway is nitrogen metabolism; urea degradation; CO(2) and NH(3) from urea (urease route): step 1/1. This Streptomyces avermitilis (strain ATCC 31267 / DSM 46492 / JCM 5070 / NBRC 14893 / NCIMB 12804 / NRRL 8165 / MA-4680) protein is Urease subunit alpha 2.